Reading from the N-terminus, the 95-residue chain is Putative regulatory protein Daud_1598 (95 aa).

This sequence belongs to the RemA family.

The sequence is that of Putative regulatory protein Daud_1598 from Desulforudis audaxviator (strain MP104C).